We begin with the raw amino-acid sequence, 364 residues long: Protein-glutamate methylesterase/protein-glutamine glutaminase 1 (364 aa).

A Response regulatory domain is found at 6–123 (KVLCVDDSAL…RDGMLDYSEK (118 aa)). Position 57 is a 4-aspartylphosphate (aspartate 57). Residues 165-357 (LVSTEKLIIV…RRIMARLASM (193 aa)) form the CheB-type methylesterase domain. Residues serine 177, histidine 203, and aspartate 299 contribute to the active site.

It belongs to the CheB family. In terms of processing, phosphorylated by CheA. Phosphorylation of the N-terminal regulatory domain activates the methylesterase activity.

Its subcellular location is the cytoplasm. The enzyme catalyses [protein]-L-glutamate 5-O-methyl ester + H2O = L-glutamyl-[protein] + methanol + H(+). The catalysed reaction is L-glutaminyl-[protein] + H2O = L-glutamyl-[protein] + NH4(+). Functionally, involved in chemotaxis. Part of a chemotaxis signal transduction system that modulates chemotaxis in response to various stimuli. Catalyzes the demethylation of specific methylglutamate residues introduced into the chemoreceptors (methyl-accepting chemotaxis proteins or MCP) by CheR. Also mediates the irreversible deamidation of specific glutamine residues to glutamic acid. This chain is Protein-glutamate methylesterase/protein-glutamine glutaminase 1, found in Burkholderia mallei (strain ATCC 23344).